Here is a 213-residue protein sequence, read N- to C-terminus: Pyridoxine/pyridoxamine 5'-phosphate oxidase (213 aa).

Residues 8–11 (RKNY) and Lys66 contribute to the substrate site. Residues 61 to 66 (RIVLIK), 76 to 77 (FT), Arg82, Lys83, and Gln105 each bind FMN. Substrate contacts are provided by Tyr123, Arg127, and Ser131. Residues 140–141 (QS) and Trp184 contribute to the FMN site. 190-192 (RLH) is a binding site for substrate. Arg194 serves as a coordination point for FMN.

Belongs to the pyridoxamine 5'-phosphate oxidase family. As to quaternary structure, homodimer. FMN serves as cofactor.

The enzyme catalyses pyridoxamine 5'-phosphate + O2 + H2O = pyridoxal 5'-phosphate + H2O2 + NH4(+). It carries out the reaction pyridoxine 5'-phosphate + O2 = pyridoxal 5'-phosphate + H2O2. It functions in the pathway cofactor metabolism; pyridoxal 5'-phosphate salvage; pyridoxal 5'-phosphate from pyridoxamine 5'-phosphate: step 1/1. It participates in cofactor metabolism; pyridoxal 5'-phosphate salvage; pyridoxal 5'-phosphate from pyridoxine 5'-phosphate: step 1/1. Functionally, catalyzes the oxidation of either pyridoxine 5'-phosphate (PNP) or pyridoxamine 5'-phosphate (PMP) into pyridoxal 5'-phosphate (PLP). This Paraburkholderia xenovorans (strain LB400) protein is Pyridoxine/pyridoxamine 5'-phosphate oxidase.